A 444-amino-acid polypeptide reads, in one-letter code: Structure-specific endonuclease subunit SLX1 (444 aa).

A GIY-YIG domain is found at 23–105; that stretch reads AFSCCYLLRS…QNTKVSRHAD (83 aa). The SLX1-type zinc-finger motif lies at 240-295; it reads CGVCKQRLILQHDIIAVCSHSSCHCAAHLSCLSSHFLKDKDSDSELVPREGTCPTC. Positions 324-354 are disordered; that stretch reads RRQRAGTPKGQGLKSVRGRGHSEDENESDAL.

Belongs to the SLX1 family. Forms a heterodimer with SLX4. A divalent metal cation serves as cofactor.

It localises to the nucleus. Catalytic subunit of the SLX1-SLX4 structure-specific endonuclease that resolves DNA secondary structures generated during DNA repair and recombination. Has endonuclease activity towards branched DNA substrates, introducing single-strand cuts in duplex DNA close to junctions with ss-DNA. This chain is Structure-specific endonuclease subunit SLX1, found in Paracoccidioides lutzii (strain ATCC MYA-826 / Pb01) (Paracoccidioides brasiliensis).